An 872-amino-acid polypeptide reads, in one-letter code: HTH-type transcriptional regulator AlkS (872 aa).

Residues 805–870 form the HTH luxR-type domain; sequence LTNTQSTITI…RAVSEARLRG (66 aa). Positions 829–848 form a DNA-binding region, H-T-H motif; that stretch reads NKEIAERLLITEDTVKWHLK.

It participates in hydrocarbon metabolism; alkane degradation. Its function is as follows. This protein activates the expression of AlkB1 in the presence of alkanes. The polypeptide is HTH-type transcriptional regulator AlkS (alkS) (Alcanivorax borkumensis (strain ATCC 700651 / DSM 11573 / NCIMB 13689 / SK2)).